The sequence spans 1213 residues: DNA-directed RNA polymerase subunit beta' (1213 aa).

Zn(2+) is bound by residues Cys-60, Cys-62, Cys-75, and Cys-78. Mg(2+) contacts are provided by Asp-450, Asp-452, and Asp-454. Cys-819, Cys-893, Cys-900, and Cys-903 together coordinate Zn(2+).

The protein belongs to the RNA polymerase beta' chain family. In terms of assembly, the RNAP catalytic core consists of 2 alpha, 1 beta, 1 beta' and 1 omega subunit. When a sigma factor is associated with the core the holoenzyme is formed, which can initiate transcription. It depends on Mg(2+) as a cofactor. Zn(2+) serves as cofactor.

It carries out the reaction RNA(n) + a ribonucleoside 5'-triphosphate = RNA(n+1) + diphosphate. In terms of biological role, DNA-dependent RNA polymerase catalyzes the transcription of DNA into RNA using the four ribonucleoside triphosphates as substrates. The protein is DNA-directed RNA polymerase subunit beta' of Streptococcus pyogenes serotype M6 (strain ATCC BAA-946 / MGAS10394).